We begin with the raw amino-acid sequence, 422 residues long: Serine hydroxymethyltransferase (422 aa).

Residues Leu113 and 117 to 119 (GHL) contribute to the (6S)-5,6,7,8-tetrahydrofolate site. The residue at position 222 (Lys222) is an N6-(pyridoxal phosphate)lysine.

The protein belongs to the SHMT family. In terms of assembly, homodimer. The cofactor is pyridoxal 5'-phosphate.

It is found in the cytoplasm. It carries out the reaction (6R)-5,10-methylene-5,6,7,8-tetrahydrofolate + glycine + H2O = (6S)-5,6,7,8-tetrahydrofolate + L-serine. The protein operates within one-carbon metabolism; tetrahydrofolate interconversion. Its pathway is amino-acid biosynthesis; glycine biosynthesis; glycine from L-serine: step 1/1. In terms of biological role, catalyzes the reversible interconversion of serine and glycine with tetrahydrofolate (THF) serving as the one-carbon carrier. This reaction serves as the major source of one-carbon groups required for the biosynthesis of purines, thymidylate, methionine, and other important biomolecules. Also exhibits THF-independent aldolase activity toward beta-hydroxyamino acids, producing glycine and aldehydes, via a retro-aldol mechanism. This Amoebophilus asiaticus (strain 5a2) protein is Serine hydroxymethyltransferase.